A 455-amino-acid chain; its full sequence is Argininosuccinate lyase (455 aa).

This sequence belongs to the lyase 1 family. Argininosuccinate lyase subfamily.

The protein localises to the cytoplasm. It carries out the reaction 2-(N(omega)-L-arginino)succinate = fumarate + L-arginine. The protein operates within amino-acid biosynthesis; L-arginine biosynthesis; L-arginine from L-ornithine and carbamoyl phosphate: step 3/3. The chain is Argininosuccinate lyase from Shewanella sp. (strain MR-4).